The sequence spans 118 residues: Large ribosomal subunit protein uL18 (118 aa).

This sequence belongs to the universal ribosomal protein uL18 family. Part of the 50S ribosomal subunit; part of the 5S rRNA/L5/L18/L25 subcomplex. Contacts the 5S and 23S rRNAs.

Its function is as follows. This is one of the proteins that bind and probably mediate the attachment of the 5S RNA into the large ribosomal subunit, where it forms part of the central protuberance. The polypeptide is Large ribosomal subunit protein uL18 (Rhizorhabdus wittichii (strain DSM 6014 / CCUG 31198 / JCM 15750 / NBRC 105917 / EY 4224 / RW1) (Sphingomonas wittichii)).